The chain runs to 100 residues: Large ribosomal subunit protein uL23 (100 aa).

Belongs to the universal ribosomal protein uL23 family. As to quaternary structure, part of the 50S ribosomal subunit. Contacts protein L29, and trigger factor when it is bound to the ribosome.

One of the early assembly proteins it binds 23S rRNA. One of the proteins that surrounds the polypeptide exit tunnel on the outside of the ribosome. Forms the main docking site for trigger factor binding to the ribosome. This is Large ribosomal subunit protein uL23 from Buchnera aphidicola subsp. Baizongia pistaciae (strain Bp).